Consider the following 148-residue polypeptide: Protoporphyrinogen IX oxidase (148 aa).

Helical transmembrane passes span 7–27 (YFLW…AALF), 58–78 (SFIA…MLLI), 86–106 (GGWL…HFYC), and 128–148 (FNEA…VKPF). His-15 contacts heme. Lys-92 is a binding site for heme.

The protein belongs to the HemJ family. In terms of assembly, homodimer. Requires heme b as cofactor.

The protein localises to the cell membrane. The catalysed reaction is protoporphyrinogen IX + 3 A = protoporphyrin IX + 3 AH2. It participates in porphyrin-containing compound metabolism; protoporphyrin-IX biosynthesis; protoporphyrin-IX from protoporphyrinogen-IX: step 1/1. Catalyzes the oxidation of protoporphyrinogen IX to protoporphyrin IX. Is involved in the biosynthesis of tetrapyrrole molecules like heme. Does not use oxygen or artificial electron acceptors such as menadione or benzoquinone. In Helicobacter pylori (strain ATCC 700392 / 26695) (Campylobacter pylori), this protein is Protoporphyrinogen IX oxidase.